Consider the following 361-residue polypeptide: 5-formaminoimidazole-4-carboxamide-1-(beta)-D-ribofuranosyl 5'-monophosphate synthetase (361 aa).

Positions 27 and 94 each coordinate 5-amino-1-(5-phospho-beta-D-ribosyl)imidazole-4-carboxamide. The ATP-grasp domain occupies 116 to 348; that stretch reads RRILRWESER…MGQRIAREIK (233 aa). ATP-binding positions include 156–166, 199–202, and E230; these read KFPGARGGRGY and EEYV. Residue N258 participates in 5-amino-1-(5-phospho-beta-D-ribosyl)imidazole-4-carboxamide binding. The Mg(2+) site is built by Q297 and E310.

Belongs to the phosphohexose mutase family. Homohexamer. Dimer of trimers. It depends on Mg(2+) as a cofactor. Mn(2+) serves as cofactor.

It carries out the reaction 5-amino-1-(5-phospho-beta-D-ribosyl)imidazole-4-carboxamide + formate + ATP = 5-formamido-1-(5-phospho-D-ribosyl)imidazole-4-carboxamide + ADP + phosphate. It participates in purine metabolism; IMP biosynthesis via de novo pathway; 5-formamido-1-(5-phospho-D-ribosyl)imidazole-4-carboxamide from 5-amino-1-(5-phospho-D-ribosyl)imidazole-4-carboxamide (formate route): step 1/1. Inhibited by ADP. Functionally, catalyzes the ATP- and formate-dependent formylation of 5-aminoimidazole-4-carboxamide-1-beta-d-ribofuranosyl 5'-monophosphate (AICAR) to 5-formaminoimidazole-4-carboxamide-1-beta-d-ribofuranosyl 5'-monophosphate (FAICAR) in the absence of folates. The polypeptide is 5-formaminoimidazole-4-carboxamide-1-(beta)-D-ribofuranosyl 5'-monophosphate synthetase (Methanocaldococcus jannaschii (strain ATCC 43067 / DSM 2661 / JAL-1 / JCM 10045 / NBRC 100440) (Methanococcus jannaschii)).